A 214-amino-acid polypeptide reads, in one-letter code: Ribosomal RNA small subunit methyltransferase G (214 aa).

Residues Gly-81, Met-86, 132–133, and Arg-147 each bind S-adenosyl-L-methionine; that span reads AE.

It belongs to the methyltransferase superfamily. RNA methyltransferase RsmG family.

It is found in the cytoplasm. It catalyses the reaction guanosine(527) in 16S rRNA + S-adenosyl-L-methionine = N(7)-methylguanosine(527) in 16S rRNA + S-adenosyl-L-homocysteine. Specifically methylates the N7 position of guanine in position 527 of 16S rRNA. This Pseudomonas syringae pv. syringae (strain B728a) protein is Ribosomal RNA small subunit methyltransferase G.